Here is a 141-residue protein sequence, read N- to C-terminus: Large ribosomal subunit protein uL11 (141 aa).

This sequence belongs to the universal ribosomal protein uL11 family. As to quaternary structure, part of the ribosomal stalk of the 50S ribosomal subunit. Interacts with L10 and the large rRNA to form the base of the stalk. L10 forms an elongated spine to which L12 dimers bind in a sequential fashion forming a multimeric L10(L12)X complex. Post-translationally, one or more lysine residues are methylated.

Functionally, forms part of the ribosomal stalk which helps the ribosome interact with GTP-bound translation factors. The chain is Large ribosomal subunit protein uL11 from Ruegeria sp. (strain TM1040) (Silicibacter sp.).